Reading from the N-terminus, the 613-residue chain is Azole resistance protein 1 (613 aa).

Residues 1-38 are disordered; it reads MKGEPKTYSMSDLSYYGEKAQQQNEKQQKQYVVRRNST. The Extracellular segment spans residues 1–70; that stretch reads MKGEPKTYSM…PKGFILYASL (70 aa). The chain crosses the membrane as a helical span at residues 71 to 91; the sequence is IALALSLFLAALDIMIVSTII. At 92 to 102 the chain is on the cytoplasmic side; that stretch reads EEVAKQFGSYS. A helical transmembrane segment spans residues 103–123; the sequence is EIGWLFTGYSLPNALLALIWG. Over 124–134 the chain is Extracellular; that stretch reads RIATPIGFKET. The chain crosses the membrane as a helical span at residues 135-155; the sequence is MLFAIVIFEIGSLISALANSM. Residues 156–163 are Cytoplasmic-facing; sequence SMLIGGRV. The helical transmembrane segment at 164 to 184 threads the bilayer; sequence IAGVGGCGIQSLSFVIGSTLV. At 185–189 the chain is on the extracellular side; the sequence is EESQR. The helical transmembrane segment at 190 to 210 threads the bilayer; that stretch reads GILIAVLSCSFAIASVVGPFL. Over 211-221 the chain is Cytoplasmic; the sequence is GGVFTSSVTWR. A helical transmembrane segment spans residues 222 to 242; that stretch reads WCFYVNLPIGGLAFFLFLFFY. Topologically, residues 243-298 are extracellular; sequence NPGLSTFQETMDNIRKFPSQFIEIVRNVAYHLLKIKGFSKLNGWRKPFMELIFMYD. The helical transmembrane segment at 299–319 threads the bilayer; the sequence is IIEFVFCSAGFTCILLAFTFG. The Cytoplasmic portion of the chain corresponds to 320–329; the sequence is GNRYAWNSAS. A helical membrane pass occupies residues 330 to 350; it reads IIILFIIGIVLVVLAGIYDFL. The Extracellular portion of the chain corresponds to 351–375; sequence VFPKFNIVKATPHYQPLMSWTNIKK. A helical membrane pass occupies residues 376-396; sequence PGIFTVNIALFLTCAGYISQF. Residues 397 to 414 lie on the Cytoplasmic side of the membrane; the sequence is TYIVQYFQLIYNDSAWRA. Residues 415–435 traverse the membrane as a helical segment; sequence AVHLVACIISTVVTAILCGAI. The Extracellular segment spans residues 436-443; it reads TDKTRQIK. Residues 444-464 form a helical membrane-spanning segment; that stretch reads PIIVISSIFGVVGAGILTLLN. The Cytoplasmic segment spans residues 465–472; that stretch reads NNANNSAH. The chain crosses the membrane as a helical span at residues 473 to 493; that stretch reads IGLLILPGVAFGGLAQSSMLA. Residues 494–581 are Extracellular-facing; that stretch reads SQIQLDKKSP…SKLGNIISES (88 aa). The helical transmembrane segment at 582–602 threads the bilayer; the sequence is LTDVFYMALGFYALSLIFAVF. Over 603 to 613 the chain is Cytoplasmic; that stretch reads ASNKKVTASLR.

Belongs to the major facilitator superfamily.

It is found in the cell membrane. In terms of biological role, transporter protein required for adaptation to high stress imposed by low-chain organic acids, in particular by acetic acid, and for resistance to azoles, especially to ketoconazole and fluconazole. The polypeptide is Azole resistance protein 1 (AZR1) (Saccharomyces cerevisiae (strain ATCC 204508 / S288c) (Baker's yeast)).